The primary structure comprises 382 residues: Cell division protein FtsZ (382 aa).

GTP-binding positions include 21–25, 108–110, glutamate 139, arginine 143, and aspartate 187; these read GGGNN and GTG. Residues 320–382 are disordered; sequence KDVTKPQRPS…TFLRNRNKRG (63 aa). Polar residues predominate over residues 326–341; sequence QRPSLNQSIKTHNQSV. Residues 342–351 show a composition bias toward basic and acidic residues; that stretch reads PKREPKREEP. The segment covering 352 to 365 has biased composition (polar residues); the sequence is QQQNTVSRHTSQPA.

It belongs to the FtsZ family. Homodimer. Polymerizes to form a dynamic ring structure in a strictly GTP-dependent manner. Interacts directly with several other division proteins. Interacts with FtsA. Interacts with Phi29 DNA replication protein 1. Interacts with the cell division inhibitor MciZ.

It is found in the cytoplasm. During sporulation, is negatively regulated by MciZ, which binds to FtsZ and inhibits its polymerization and the formation of the Z ring. Essential cell division protein that forms a contractile ring structure (Z ring) at the future cell division site. The regulation of the ring assembly controls the timing and the location of cell division. One of the functions of the FtsZ ring is to recruit other cell division proteins to the septum to produce a new cell wall between the dividing cells. Binds GTP and shows GTPase activity. This chain is Cell division protein FtsZ, found in Bacillus subtilis (strain 168).